Here is a 329-residue protein sequence, read N- to C-terminus: DNA-directed RNA polymerase subunit alpha (329 aa).

Residues 1–235 (MQGSVTEFLK…EQLDAFVDLR (235 aa)) form an alpha N-terminal domain (alpha-NTD) region. The segment at 249–329 (FDPILLRPVD…NWPPASIAED (81 aa)) is alpha C-terminal domain (alpha-CTD).

The protein belongs to the RNA polymerase alpha chain family. In terms of assembly, homodimer. The RNAP catalytic core consists of 2 alpha, 1 beta, 1 beta' and 1 omega subunit. When a sigma factor is associated with the core the holoenzyme is formed, which can initiate transcription.

It carries out the reaction RNA(n) + a ribonucleoside 5'-triphosphate = RNA(n+1) + diphosphate. Functionally, DNA-dependent RNA polymerase catalyzes the transcription of DNA into RNA using the four ribonucleoside triphosphates as substrates. The sequence is that of DNA-directed RNA polymerase subunit alpha from Aliivibrio fischeri (strain ATCC 700601 / ES114) (Vibrio fischeri).